The sequence spans 269 residues: 2' cyclic ADP-D-ribose synthase AbTIR (269 aa).

Residues L31–Q99 are a coiled coil. The region spanning P133–I266 is the TIR domain. Residues S143, K172, and K202 each coordinate NAD(+). Residue E208 is part of the active site. K245 provides a ligand contact to NAD(+).

Homodimer. In the presence of NAD(+) analog 8-amino-isoquinoline adenine dinucleotide (3AD) forms filaments with 3AD between monomers; conformational changes occur upon 3AD binding.

It catalyses the reaction NAD(+) = 2'cADPR + nicotinamide + H(+). The enzyme catalyses NAD(+) + H2O = ADP-D-ribose + nicotinamide + H(+). The catalysed reaction is NADP(+) + H2O = ADP-D-ribose 2'-phosphate + nicotinamide + H(+). NAD(+) hydrolase (NADase) that catalyzes cleavage of NAD(+) into ADP-D-ribose (ADPR) and nicotinamide. In addition to ADPR, also generates a cyclization variant of cyclic ADPR (cADPR), termed 2'cADPR (v-cADPR). Cleaves NADP(+), but does not cyclize the product. The polypeptide is 2' cyclic ADP-D-ribose synthase AbTIR (Acinetobacter baumannii (strain 1295743)).